Consider the following 921-residue polypeptide: Extended synaptotagmin-2 (921 aa).

Over 1–103 the chain is Cytoplasmic; sequence MTANRDAALS…RPGGPENPGG (103 aa). The interval 1–103 is disordered; it reads MTANRDAALS…RPGGPENPGG (103 aa). The segment covering 58 to 75 has biased composition (basic residues); it reads GARRRAKTARGLRGHRQR. Residues 104–124 traverse the membrane as a helical segment; it reads VLSVELPGLLAQLARSFALLL. Residues 125–127 are Lumenal-facing; the sequence is PVY. Residues 128-148 form a helical membrane-spanning segment; it reads ALGYLGLSFSWVLLALALLAW. Topologically, residues 149 to 921 are cytoplasmic; it reads CRRSRGLKAL…EDGTRPQAMT (773 aa). The SMP-LTD domain maps to 191–370; that stretch reads DTERAEWLNK…LPNRITVPLV (180 aa). C2 domains are found at residues 369–489 and 514–639; these read LVSE…DEWF and NLDK…QLSN. Positions 400, 401, 413, 460, 461, 462, 464, 466, and 467 each coordinate Ca(2+). Positions 660-754 are disordered; it reads RERPPDHQHS…GHISVKEPTP (95 aa). Residues Ser-691 and Ser-693 each carry the phosphoserine modification. A Phosphothreonine modification is found at Thr-705. A phosphoserine mark is found at Ser-736, Ser-738, Ser-739, Ser-743, Ser-748, Ser-755, Ser-758, and Ser-761. Residues 786-908 form the C2 3 domain; that stretch reads PLGQIQLTIR…ELAKGWTQWY (123 aa). Residues 833–840 are required for phosphatidylinositol 4,5-bisphosphate-dependent location at the cell membrane; the sequence is KRRSGRRK.

The protein belongs to the extended synaptotagmin family. Homodimer. Interacts with ESYT1 and ESYT3. Interacts with FGFR1 that has been activated by FGF1 binding. Interacts with the AP-2 complex; identified in a complex with the AP-2 complex and FGFR1. Widely expressed with high level in cerebellum.

It is found in the cell membrane. The protein localises to the endoplasmic reticulum membrane. Its function is as follows. Tethers the endoplasmic reticulum to the cell membrane and promotes the formation of appositions between the endoplasmic reticulum and the cell membrane. Binds glycerophospholipids in a barrel-like domain and may play a role in cellular lipid transport. Plays a role in FGF signaling via its role in the rapid internalization of FGFR1 that has been activated by FGF1 binding; this occurs most likely via the AP-2 complex. Promotes the localization of SACM1L at endoplasmic reticulum-plasma membrane contact sites (EPCS). The protein is Extended synaptotagmin-2 of Homo sapiens (Human).